A 59-amino-acid chain; its full sequence is Large ribosomal subunit protein uL30 (59 aa).

The protein belongs to the universal ribosomal protein uL30 family. As to quaternary structure, part of the 50S ribosomal subunit.

In Shewanella amazonensis (strain ATCC BAA-1098 / SB2B), this protein is Large ribosomal subunit protein uL30.